The primary structure comprises 933 residues: Anoctamin-7 (933 aa).

The Cytoplasmic segment spans residues 1 to 355 (MRMAATAWAG…YFAWLGFYTG (355 aa)). The interval 43–101 (ETSSGSHCARSRMLRRRAQEEDSTVLIDVSPPEAEKRGSYGSTAHASEPGGQQAAACRA) is disordered. A helical membrane pass occupies residues 356 to 376 (WLLPAAVVGTLVFLVGCFLVF). At 377–420 (SDIPTQELCGSKDSFEMCPLCLDCPFWLLSSACALAQAGRLFDH) the chain is on the extracellular side. A helical membrane pass occupies residues 421–441 (GGTVFFSLFMALWAVLLLEYW). Residues 442 to 499 (KRKSATLAYRWDCSDYEDTEERPRPQFAASAPMTAPNPITGEDEPYFPERSRARRMLA) lie on the Cytoplasmic side of the membrane. The helical transmembrane segment at 500–520 (GSVVIVVMVAVVVMCLVSIIL) threads the bilayer. Residues 521–550 (YRAIMAIVVSRSGNTLLAAWASRIASLTGS) are Extracellular-facing. Residues 551–571 (VVNLVFILILSKIYVSLAHVL) traverse the membrane as a helical segment. Residues 572-588 (TRWEMHRTQTKFEDAFT) lie on the Cytoplasmic side of the membrane. A helical membrane pass occupies residues 589–609 (LKVFIFQFVNFYSSPVYIAFF). The Extracellular segment spans residues 610–714 (KGRFVGYPGN…FDEYLEMVLQ (105 aa)). Residues 715–735 (FGFVTIFVAACPLAPLFALLN) traverse the membrane as a helical segment. The Cytoplasmic segment spans residues 736–763 (NWVEIRLDARKFVCEYRRPVAERAQDIG). Residues 764 to 784 (IWFHILAGLTHLAVISNAFLL) traverse the membrane as a helical segment. The Extracellular segment spans residues 785 to 843 (AFSSDFLPRAYYRWTRAHDLRGFLNFTLARAPSSFAAAHNRTCRYRAFRDDDGHYSQTY). Residues N809 and N824 are each glycosylated (N-linked (GlcNAc...) asparagine). A helical membrane pass occupies residues 844-864 (WNLLAIRLAFVIVFEHVVFSV). At 865–933 (GRLLDLLVPD…TVPKASQLQQ (69 aa)) the chain is on the cytoplasmic side. The segment at 902-933 (GTNGTKDEQPEGSELSSHWTPFTVPKASQLQQ) is disordered. Residues 915–933 (ELSSHWTPFTVPKASQLQQ) are compositionally biased toward polar residues.

This sequence belongs to the anoctamin family. In terms of tissue distribution, specifically expressed in epithelial cells of the prostate (at protein level).

The protein resides in the cell membrane. Its subcellular location is the cell junction. It localises to the endoplasmic reticulum. It is found in the cytoplasm. The protein localises to the cytosol. It catalyses the reaction a 1,2-diacyl-sn-glycero-3-phospho-L-serine(in) = a 1,2-diacyl-sn-glycero-3-phospho-L-serine(out). The enzyme catalyses a beta-D-galactosyl-(1&lt;-&gt;1')-N-acylsphing-4-enine(out) = a beta-D-galactosyl-(1&lt;-&gt;1')-N-acylsphing-4-enine(in). The catalysed reaction is a 1,2-diacyl-sn-glycero-3-phosphocholine(in) = a 1,2-diacyl-sn-glycero-3-phosphocholine(out). In terms of biological role, has calcium-dependent phospholipid scramblase activity; scrambles phosphatidylserine, phosphatidylcholine and galactosylceramide. Does not exhibit calcium-activated chloride channel (CaCC) activity. May play a role in cell-cell interactions. The polypeptide is Anoctamin-7 (ANO7) (Homo sapiens (Human)).